A 292-amino-acid chain; its full sequence is Transcription antiterminator LacT (292 aa).

PRD domains are found at residues 66 to 170 and 172 to 284; these read NIPI…DDGE and VFGK…APAQ.

It belongs to the transcriptional antiterminator BglG family.

Its function is as follows. Mediates positive regulation of the lac operon by functioning as an antiterminator factor of transcription. In Lacticaseibacillus casei (Lactobacillus casei), this protein is Transcription antiterminator LacT (lacT).